The sequence spans 74 residues: Conotoxin TsMLCL-04 (74 aa).

The first 19 residues, 1 to 19, serve as a signal peptide directing secretion; that stretch reads MLCLPVFIILLLLASPAAP. Residues 20–60 constitute a propeptide that is removed on maturation; sequence NPLETRIQRDLIRAALEDADMKTNERFLEGVISTIKDFAGK.

It belongs to the conotoxin T superfamily. Post-translationally, contains 2 disulfide bonds that can be either 'C1-C3, C2-C4' or 'C1-C4, C2-C3', since these disulfide connectivities have been observed for conotoxins with cysteine framework V (for examples, see AC P0DQQ7 and AC P81755). Expressed by the venom duct.

The protein localises to the secreted. This Conus tessulatus (Tessellate cone) protein is Conotoxin TsMLCL-04.